The primary structure comprises 383 residues: MLKYELLTTDGLARRGRMTLNHGVVETPIFMPVGTYGAVKAMSPAELKDIGAQIILGNTFHLWLRPGLEVMDAHKGLHGFNGWDKPILTDSGGFQVFSLGDLRKITEDGVTFASPINGDKLFLSPEISMQIQRRLNSDIVMQFDECTPYKIGDRPATEAEAAASMRMSLRWAQRSRNEFEREKNPNALFAIVQGGMFENLRDESLAGLQAIDADAGGEGFGGYAIGGLSVGEPKEDMMRVLQHVAPRLPADKPHYLMGVGTPEDLVAGVAAGVDMFDCVMPTRNARNGWLFTRFGDIKIKNAVHRNDPRPLDETCGCYTCSNFSRAYLHHLQRVGEILGARLNTIHNLYYYLELMAEMRTAIESHGFAAFQARFAADRARGAL.

Residue D90 is the Proton acceptor of the active site. Residues 90–94 (DSGGF), D144, Q193, and G227 contribute to the substrate site. The RNA binding stretch occupies residues 258–264 (GVGTPED). The active-site Nucleophile is the D277. The RNA binding; important for wobble base 34 recognition stretch occupies residues 282–286 (TRNAR). 4 residues coordinate Zn(2+): C315, C317, C320, and H346.

The protein belongs to the queuine tRNA-ribosyltransferase family. As to quaternary structure, homodimer. Within each dimer, one monomer is responsible for RNA recognition and catalysis, while the other monomer binds to the replacement base PreQ1. Requires Zn(2+) as cofactor.

The catalysed reaction is 7-aminomethyl-7-carbaguanine + guanosine(34) in tRNA = 7-aminomethyl-7-carbaguanosine(34) in tRNA + guanine. It participates in tRNA modification; tRNA-queuosine biosynthesis. Its function is as follows. Catalyzes the base-exchange of a guanine (G) residue with the queuine precursor 7-aminomethyl-7-deazaguanine (PreQ1) at position 34 (anticodon wobble position) in tRNAs with GU(N) anticodons (tRNA-Asp, -Asn, -His and -Tyr). Catalysis occurs through a double-displacement mechanism. The nucleophile active site attacks the C1' of nucleotide 34 to detach the guanine base from the RNA, forming a covalent enzyme-RNA intermediate. The proton acceptor active site deprotonates the incoming PreQ1, allowing a nucleophilic attack on the C1' of the ribose to form the product. After dissociation, two additional enzymatic reactions on the tRNA convert PreQ1 to queuine (Q), resulting in the hypermodified nucleoside queuosine (7-(((4,5-cis-dihydroxy-2-cyclopenten-1-yl)amino)methyl)-7-deazaguanosine). The chain is Queuine tRNA-ribosyltransferase from Ralstonia pickettii (strain 12J).